Here is a 226-residue protein sequence, read N- to C-terminus: MRDFVTGTTVVSFRYRDGIIMGADTRGSYGRLAKLSGVQRIFKVGDQTLLGMSGEISDMQYLVKTLTILTQEDNRRIDPKGYHKMIQRILYSARSKISPLNLSVCVGGLNAASDGDRRTHTREKMLGCVNHLGNFYFSDVVCTGIGGYLVLPFLRNRVEGREEEIAREEAIGLVEEAMRILCYRDCNASNEIQVGYVDDQGVHISDPYQIKTNWDVGLREDEIVIE.

Belongs to the peptidase T1B family. In terms of assembly, the 26S proteasome consists of a 20S proteasome core and two 19S regulatory subunits. The 20S proteasome core is composed of 28 subunits that are arranged in four stacked rings, resulting in a barrel-shaped structure. The two end rings are each formed by seven alpha subunits, and the two central rings are each formed by seven beta subunits. The catalytic chamber with the active sites is on the inside of the barrel.

It is found in the cytoplasm. The protein localises to the nucleus. Functionally, non-catalytic component of the proteasome which degrades poly-ubiquitinated proteins in the cytoplasm and in the nucleus. It is essential for the regulated turnover of proteins and for the removal of misfolded proteins. The proteasome is a multicatalytic proteinase complex that is characterized by its ability to cleave peptides with Arg, Phe, Tyr, Leu, and Glu adjacent to the leaving group at neutral or slightly basic pH. It has an ATP-dependent proteolytic activity. This chain is Probable proteasome subunit beta type-7 (PRE4), found in Encephalitozoon cuniculi (strain GB-M1) (Microsporidian parasite).